A 174-amino-acid polypeptide reads, in one-letter code: Small ribosomal subunit protein uS5 (174 aa).

Residues Leu-19 to Ile-82 enclose the S5 DRBM domain.

Belongs to the universal ribosomal protein uS5 family. In terms of assembly, part of the 30S ribosomal subunit. Contacts proteins S4 and S8.

In terms of biological role, with S4 and S12 plays an important role in translational accuracy. Functionally, located at the back of the 30S subunit body where it stabilizes the conformation of the head with respect to the body. The polypeptide is Small ribosomal subunit protein uS5 (Albidiferax ferrireducens (strain ATCC BAA-621 / DSM 15236 / T118) (Rhodoferax ferrireducens)).